Reading from the N-terminus, the 179-residue chain is Large ribosomal subunit protein uL5 (179 aa).

This sequence belongs to the universal ribosomal protein uL5 family. In terms of assembly, part of the 50S ribosomal subunit; part of the 5S rRNA/L5/L18/L25 subcomplex. Contacts the 5S rRNA and the P site tRNA. Forms a bridge to the 30S subunit in the 70S ribosome.

This is one of the proteins that bind and probably mediate the attachment of the 5S RNA into the large ribosomal subunit, where it forms part of the central protuberance. In the 70S ribosome it contacts protein S13 of the 30S subunit (bridge B1b), connecting the 2 subunits; this bridge is implicated in subunit movement. Contacts the P site tRNA; the 5S rRNA and some of its associated proteins might help stabilize positioning of ribosome-bound tRNAs. In Nitrosomonas europaea (strain ATCC 19718 / CIP 103999 / KCTC 2705 / NBRC 14298), this protein is Large ribosomal subunit protein uL5.